A 463-amino-acid polypeptide reads, in one-letter code: Digalactosyldiacylglycerol synthase 2, chloroplastic (463 aa).

The first 22 residues, 1–22 (MGKKQHIAIFTTASLPWLTGTA), serve as a signal peptide directing secretion.

It belongs to the glycosyltransferase group 1 family. Glycosyltransferase 4 subfamily. As to expression, high expression in nodules infected cells, and low in nodule and root vascular tissue.

It is found in the plastid. The protein localises to the chloroplast outer membrane. The protein resides in the plastid outer membrane. The catalysed reaction is a 1,2-diacyl-3-O-(beta-D-galactosyl)-sn-glycerol + UDP-alpha-D-galactose = a 1,2-diacyl-3-O-[alpha-D-galactosyl-(1-&gt;6)-beta-D-galactosyl]-sn-glycerol + UDP + H(+). In terms of biological role, involved in the synthesis of diacylglycerol galactolipids that are specifically found in thylakoid and in nodule peribacteroid membranes. Specific for alpha-glycosidic linkages. This is Digalactosyldiacylglycerol synthase 2, chloroplastic from Lotus japonicus (Lotus corniculatus var. japonicus).